A 100-amino-acid polypeptide reads, in one-letter code: Aspartyl/glutamyl-tRNA(Asn/Gln) amidotransferase subunit C (100 aa).

This sequence belongs to the GatC family. In terms of assembly, heterotrimer of A, B and C subunits.

The enzyme catalyses L-glutamyl-tRNA(Gln) + L-glutamine + ATP + H2O = L-glutaminyl-tRNA(Gln) + L-glutamate + ADP + phosphate + H(+). It catalyses the reaction L-aspartyl-tRNA(Asn) + L-glutamine + ATP + H2O = L-asparaginyl-tRNA(Asn) + L-glutamate + ADP + phosphate + 2 H(+). Allows the formation of correctly charged Asn-tRNA(Asn) or Gln-tRNA(Gln) through the transamidation of misacylated Asp-tRNA(Asn) or Glu-tRNA(Gln) in organisms which lack either or both of asparaginyl-tRNA or glutaminyl-tRNA synthetases. The reaction takes place in the presence of glutamine and ATP through an activated phospho-Asp-tRNA(Asn) or phospho-Glu-tRNA(Gln). This is Aspartyl/glutamyl-tRNA(Asn/Gln) amidotransferase subunit C from Streptococcus pneumoniae (strain Hungary19A-6).